The chain runs to 60 residues: uncharacterized protein (60 aa).

This is an uncharacterized protein from Bacillus subtilis (strain 168).